Here is a 249-residue protein sequence, read N- to C-terminus: INO80 complex subunit 1 (249 aa).

C2H2-type zinc fingers lie at residues 73 to 100 (YTCE…LRSH) and 106 to 131 (FICS…RTVH).

In terms of assembly, component of the INO80 chromatin remodeling complex.

The protein resides in the nucleus. The protein localises to the cytoplasm. Its function is as follows. Component of the INO80 complex which remodels chromatin by shifting nucleosomes and is involved in DNA repair. The protein is INO80 complex subunit 1 (iec1) of Schizosaccharomyces pombe (strain 972 / ATCC 24843) (Fission yeast).